The following is a 334-amino-acid chain: Anthranilate phosphoribosyltransferase (334 aa).

Residues G79, 82–83 (GD), S87, 89–92 (NIST), 107–115 (KHGNRSISS), and S119 each bind 5-phospho-alpha-D-ribose 1-diphosphate. Residue G79 participates in anthranilate binding. S91 provides a ligand contact to Mg(2+). N110 lines the anthranilate pocket. R165 is an anthranilate binding site. Residues D224 and E225 each coordinate Mg(2+).

It belongs to the anthranilate phosphoribosyltransferase family. In terms of assembly, homodimer. Mg(2+) is required as a cofactor.

It catalyses the reaction N-(5-phospho-beta-D-ribosyl)anthranilate + diphosphate = 5-phospho-alpha-D-ribose 1-diphosphate + anthranilate. It participates in amino-acid biosynthesis; L-tryptophan biosynthesis; L-tryptophan from chorismate: step 2/5. Its function is as follows. Catalyzes the transfer of the phosphoribosyl group of 5-phosphorylribose-1-pyrophosphate (PRPP) to anthranilate to yield N-(5'-phosphoribosyl)-anthranilate (PRA). The polypeptide is Anthranilate phosphoribosyltransferase (Streptococcus pneumoniae serotype 19F (strain G54)).